Here is a 137-residue protein sequence, read N- to C-terminus: Nucleoside diphosphate kinase (137 aa).

ATP is bound by residues Lys9, Phe57, Arg85, Thr91, Arg102, and Asn112. His115 acts as the Pros-phosphohistidine intermediate in catalysis.

The protein belongs to the NDK family. As to quaternary structure, homotetramer. Mg(2+) serves as cofactor.

The protein resides in the cytoplasm. The catalysed reaction is a 2'-deoxyribonucleoside 5'-diphosphate + ATP = a 2'-deoxyribonucleoside 5'-triphosphate + ADP. The enzyme catalyses a ribonucleoside 5'-diphosphate + ATP = a ribonucleoside 5'-triphosphate + ADP. Major role in the synthesis of nucleoside triphosphates other than ATP. The ATP gamma phosphate is transferred to the NDP beta phosphate via a ping-pong mechanism, using a phosphorylated active-site intermediate. The sequence is that of Nucleoside diphosphate kinase from Thermus thermophilus (strain ATCC BAA-163 / DSM 7039 / HB27).